We begin with the raw amino-acid sequence, 469 residues long: Mitochondrial adenyl nucleotide antiporter SLC25A25 (469 aa).

Residues 1–165 (MLCLCLYVPV…LYWKHSTIFD (165 aa)) form a regulatory N-terminal domain region. The Mitochondrial intermembrane portion of the chain corresponds to 1-189 (MLCLCLYVPV…ERQTGMWWRH (189 aa)). EF-hand domains lie at 47–80 (TYRQ…QDHE), 78–113 (DHEK…LGVK), and 114–149 (ISEQ…HPVE). 5 residues coordinate Ca(2+): Asp60, Asp62, Asp64, Gln66, and Glu71. Residues 151-160 (IPEIILYWKH) form a linker region region. The interval 166-469 (VGENLTVPDE…LKITLGVQSR (304 aa)) is C-terminal transmembrane transporter domain. 3 Solcar repeats span residues 184-270 (GMWW…IKRL), 278-363 (LRIH…LKNA), and 375-463 (PGVF…LKIT). Residues 190-207 (LVAGGGAGAVSRTCTAPL) form a helical membrane-spanning segment. At 208-244 (DRLKVLMQVHASRSNNMGIVGGFTQMIREGGARSLWR) the chain is on the mitochondrial matrix side. The chain crosses the membrane as a helical span at residues 245 to 264 (GNGINVLKIAPESAIKFMAY). Residues 265 to 287 (EQIKRLVGSDQETLRIHERLVAG) are Mitochondrial intermembrane-facing. A helical transmembrane segment spans residues 288–301 (SLAGAIAQSSIYPM). The Mitochondrial matrix segment spans residues 302–337 (EVLKTRMALRKTGQYSGMLDCARRILAREGVAAFYK). A helical membrane pass occupies residues 338-357 (GYVPNMLGIIPYAGIDLAVY). The Mitochondrial intermembrane portion of the chain corresponds to 358–380 (ETLKNAWLQHYAVNSADPGVFVL). Residues 381–398 (LACGTMSSTCGQLASYPL) traverse the membrane as a helical segment. Over 399 to 437 (ALVRTRMQAQASIEGAPEVTMSSLFKHILRTEGAFGLYR) the chain is Mitochondrial matrix. A helical transmembrane segment spans residues 438–457 (GLAPNFMKVIPAVSISYVVY). The Mitochondrial intermembrane portion of the chain corresponds to 458–469 (ENLKITLGVQSR).

This sequence belongs to the mitochondrial carrier (TC 2.A.29) family. Widely expressed. Expressed in fetal and adult liver, skeletal muscle, testis, ovary, hippocampus and caudate nucleus. As to expression, expressed in all tissues tested. In terms of tissue distribution, expression is restricted to kidney and lung.

The protein resides in the mitochondrion inner membrane. The catalysed reaction is Mg(2+)(out) + phosphate(in) + ATP(out) = Mg(2+)(in) + phosphate(out) + ATP(in). Its activity is regulated as follows. Activated by an increase in cytosolic calcium levels that induce a conformational change of the N-terminal regulatory domain, uncapping the channel and allowing transport. Functionally, electroneutral antiporter that most probably mediates the transport of adenyl nucleotides through the inner mitochondrial membrane. Originally identified as an ATP-magnesium/inorganic phosphate antiporter, it could have a broader specificity for adenyl nucleotides. By regulating the mitochondrial matrix adenyl nucleotide pool could adapt to changing cellular energetic demands and indirectly regulate adenyl nucleotide-dependent metabolic pathways. The chain is Mitochondrial adenyl nucleotide antiporter SLC25A25 from Homo sapiens (Human).